Consider the following 877-residue polypeptide: Clumping factor B (877 aa).

The first 44 residues, 1–44 (MKKRIDYLSNKQNKYSIRRFTVGTTSVIVGATILFGIGNHQAQA), serve as a signal peptide directing secretion. Positions 15–26 (YSIRRFTVGTTS) match the YSIRK-G/S signaling motif motif. Composition is skewed to polar residues over residues 44–61 (ASEQSNDTTQSSKNNASA) and 68–95 (MIETPQLNTTANDTSDISANTNSANVDS). The tract at residues 44–192 (ASEQSNDTTQ…QGTSKPSVRT (149 aa)) is disordered. Positions 45 to 542 (SEQSNDTTQS…GSADGDSAVN (498 aa)) are ligand binding A region. Positions 96–119 (TTKPMSTQTSNTTTTEPASTNETP) are enriched in low complexity. Residues 120 to 189 (QPTAIKNQAT…SNAQGTSKPS (70 aa)) are compositionally biased toward polar residues. An MIDAS-like motif motif is present at residues 272–276 (DYSNS). A disordered region spans residues 530 to 849 (YGGGSADGDS…ETGDKSENTN (320 aa)). Positions 545–555 (DPTPGPPVDPE) are enriched in pro residues. Over residues 556–801 (PSPDPEPEPT…SDSDSDSDSD (246 aa)) the composition is skewed to acidic residues. The segment covering 805–816 (RVTPPNNEQKAP) has biased composition (polar residues). Over residues 833 to 846 (HKTDALPETGDKSE) the composition is skewed to basic and acidic residues. An LPXTG sorting signal motif is present at residues 838–842 (LPETG). Threonine 841 carries the pentaglycyl murein peptidoglycan amidated threonine modification. Residues 842 to 877 (GDKSENTNATLFGAMMALLGSLLLFRKRKQDHKEKA) constitute a propeptide, removed by sortase.

Belongs to the serine-aspartate repeat-containing protein (SDr) family. Post-translationally, proteolytically cleaved by aureolysin (aur). This cleavage leads to the inactivation of ClfB.

It localises to the secreted. The protein resides in the cell wall. Its function is as follows. Cell surface-associated protein implicated in virulence by promoting bacterial attachment to both alpha- and beta-chains of human fibrinogen and inducing the formation of bacterial clumps. The sequence is that of Clumping factor B (clfB) from Staphylococcus aureus (strain Mu50 / ATCC 700699).